The sequence spans 344 residues: Interferon gamma receptor 1-like (344 aa).

An N-terminal signal peptide occupies residues M1 to G22. At F23 to G229 the chain is on the extracellular side. The Fibronectin type-III domain occupies V24–E102. Residues N29, N44, N132, and N189 are each glycosylated (N-linked (GlcNAc...) asparagine). A helical membrane pass occupies residues I230–W250. At L251 to L344 the chain is on the cytoplasmic side. The disordered stretch occupies residues T300 to L344.

This sequence belongs to the type II cytokine receptor family. Highly expressed in brain. Also detected in spleen, heart, intestine, gill and kidney. In immune cell populations, detected at low levels in monocytes, peripheral blood leukocytes, splenocytes, neutrophils and mature macrophages.

Its subcellular location is the cell membrane. In terms of biological role, receptor which shows binding specificity for the cytokine ifng1 (interferon gamma 1). This Carassius auratus (Goldfish) protein is Interferon gamma receptor 1-like.